The sequence spans 383 residues: Lipid-A-disaccharide synthase (383 aa).

It belongs to the LpxB family.

It catalyses the reaction 2-N,3-O-bis[(3R)-3-hydroxytetradecanoyl]-alpha-D-glucosaminyl 1-phosphate + UDP-2-N,3-O-bis[(3R)-3-hydroxytetradecanoyl]-alpha-D-glucosamine = lipid A disaccharide (E. coli) + UDP + H(+). The enzyme catalyses a lipid X + a UDP-2-N,3-O-bis[(3R)-3-hydroxyacyl]-alpha-D-glucosamine = a lipid A disaccharide + UDP + H(+). It functions in the pathway glycolipid biosynthesis; lipid IV(A) biosynthesis; lipid IV(A) from (3R)-3-hydroxytetradecanoyl-[acyl-carrier-protein] and UDP-N-acetyl-alpha-D-glucosamine: step 5/6. Its function is as follows. Condensation of UDP-2,3-diacylglucosamine and 2,3-diacylglucosamine-1-phosphate to form lipid A disaccharide, a precursor of lipid A, a phosphorylated glycolipid that anchors the lipopolysaccharide to the outer membrane of the cell. The sequence is that of Lipid-A-disaccharide synthase from Klebsiella pneumoniae (strain 342).